A 33-amino-acid polypeptide reads, in one-letter code: PRRRRETSRPIRRRRRARRAPIRRRRRVVRRRR.

Residues 1–33 (PRRRRETSRPIRRRRRARRAPIRRRRRVVRRRR) form a disordered region.

As to expression, testis.

The protein resides in the nucleus. It localises to the chromosome. Functionally, protamines substitute for histones in the chromatin of sperm during the haploid phase of spermatogenesis. They compact sperm DNA into a highly condensed, stable and inactive complex. The protein is Protamine-M6/M7 of Mugil cephalus (Flathead mullet).